The primary structure comprises 469 residues: Glutamate--tRNA ligase 1 (469 aa).

A 'HIGH' region motif is present at residues 10-20 (PSPTGYLHIGG). 4 residues coordinate Zn(2+): C99, C101, C126, and D128. The 'KMSKS' region signature appears at 237-241 (RLSKR). K240 is an ATP binding site.

This sequence belongs to the class-I aminoacyl-tRNA synthetase family. Glutamate--tRNA ligase type 1 subfamily. As to quaternary structure, monomer. It depends on Zn(2+) as a cofactor.

It is found in the cytoplasm. The catalysed reaction is tRNA(Glu) + L-glutamate + ATP = L-glutamyl-tRNA(Glu) + AMP + diphosphate. Catalyzes the attachment of glutamate to tRNA(Glu) in a two-step reaction: glutamate is first activated by ATP to form Glu-AMP and then transferred to the acceptor end of tRNA(Glu). The chain is Glutamate--tRNA ligase 1 from Coxiella burnetii (strain CbuK_Q154) (Coxiella burnetii (strain Q154)).